The sequence spans 307 residues: Thiohydrolase apmlB (307 aa).

Belongs to the polyketide transferase af380 family.

Functionally, thiohydrolase; part of the gene cluster that mediates the biosynthesis of phaeospelide A, a fungal polyene macrolide with a 34-membered macrolactone ring and an all-trans conjugated hexaene structure. The HR-PKS ApmlA uses acetyl-CoA and malonyl-CoA as its starter and extender units, respectively, and provides the large carbon framework in phaeospelide via 16 cycles of polyketide chain elongation, which is the largest number identified in fungal iterative PKSs thus far. During round 1, the KR domain reduces beta -ketone to an L-oriented hydroxy group, while during later rounds, it provides hydroxy groups in the D-configuration. The characteristic conjugated hexaene moiety is built during the later rounds (10-15), when the KR and DH domains are at work but ER is off. Phylogenetic analysis of the DH domain suggests that a polyene formation is programmed in the DH domain. Finally, the mature ACP-tethered carbon chain is transferred to the serine residue of the thiohydrolase apmlB, followed by intramolecular macrolactonization, generating phaeospelide A. When one elongation cycle during rounds 7-9 is skipped, phaeospelide B is biosynthesized instead. This Arthrinium phaeospermum (Gymnosporium phaeospermum) protein is Thiohydrolase apmlB.